The sequence spans 153 residues: SsrA-binding protein (153 aa).

The segment at 131-153 is disordered; the sequence is EYDKRDSIRERDDRREMDRAFKR.

Belongs to the SmpB family.

The protein resides in the cytoplasm. Its function is as follows. Required for rescue of stalled ribosomes mediated by trans-translation. Binds to transfer-messenger RNA (tmRNA), required for stable association of tmRNA with ribosomes. tmRNA and SmpB together mimic tRNA shape, replacing the anticodon stem-loop with SmpB. tmRNA is encoded by the ssrA gene; the 2 termini fold to resemble tRNA(Ala) and it encodes a 'tag peptide', a short internal open reading frame. During trans-translation Ala-aminoacylated tmRNA acts like a tRNA, entering the A-site of stalled ribosomes, displacing the stalled mRNA. The ribosome then switches to translate the ORF on the tmRNA; the nascent peptide is terminated with the 'tag peptide' encoded by the tmRNA and targeted for degradation. The ribosome is freed to recommence translation, which seems to be the essential function of trans-translation. This is SsrA-binding protein from Parabacteroides distasonis (strain ATCC 8503 / DSM 20701 / CIP 104284 / JCM 5825 / NCTC 11152).